A 354-amino-acid chain; its full sequence is Chorismate synthase (354 aa).

NADP(+)-binding residues include Arg-48 and Arg-54. FMN is bound by residues 125 to 127 (RSS), 238 to 239 (NA), Gly-278, 293 to 297 (KPTSS), and Arg-319.

The protein belongs to the chorismate synthase family. In terms of assembly, homotetramer. It depends on FMNH2 as a cofactor.

It carries out the reaction 5-O-(1-carboxyvinyl)-3-phosphoshikimate = chorismate + phosphate. The protein operates within metabolic intermediate biosynthesis; chorismate biosynthesis; chorismate from D-erythrose 4-phosphate and phosphoenolpyruvate: step 7/7. Catalyzes the anti-1,4-elimination of the C-3 phosphate and the C-6 proR hydrogen from 5-enolpyruvylshikimate-3-phosphate (EPSP) to yield chorismate, which is the branch point compound that serves as the starting substrate for the three terminal pathways of aromatic amino acid biosynthesis. This reaction introduces a second double bond into the aromatic ring system. In Blochmanniella pennsylvanica (strain BPEN), this protein is Chorismate synthase.